Reading from the N-terminus, the 108-residue chain is UPF0060 membrane protein KPN78578_15550 (108 aa).

The next 4 helical transmembrane spans lie at 6 to 26 (LLFF…WLWL), 29 to 49 (GATP…VWLL), 61 to 81 (AAYG…VDGV), and 86 to 106 (YDWA…AGWG).

It belongs to the UPF0060 family.

It localises to the cell inner membrane. In Klebsiella pneumoniae subsp. pneumoniae (strain ATCC 700721 / MGH 78578), this protein is UPF0060 membrane protein KPN78578_15550.